A 779-amino-acid chain; its full sequence is Potassium/sodium hyperpolarization-activated cyclic nucleotide-gated channel 3 (779 aa).

The disordered stretch occupies residues 1–47 (MEEEARPAAGAGEAATPARETPPAAPAQARAASGGVPESAPEPKRRQ). Residues 1–96 (MEEEARPAAG…PYSDFRFYWD (96 aa)) lie on the Cytoplasmic side of the membrane. A compositionally biased stretch (low complexity) spans 7-32 (PAAGAGEAATPARETPPAAPAQARAA). The segment at 45–90 (RRQLGTLLQPTVNKFSLRVFGSHKAVEIEQERVKSAGAWIIHPYSD) is involved in subunit assembly. A helical transmembrane segment spans residues 97-117 (LIMLLLMVGNLIVLPVGITFF). At 118 to 123 (KEENSP) the chain is on the extracellular side. Residues 124–144 (PWIVFNVLSDTFFLLDLVLNF) form a helical membrane-spanning segment. The Cytoplasmic portion of the chain corresponds to 145-170 (RTGIVVEEGAEILLAPRAIRTRYLRT). The chain crosses the membrane as a helical span at residues 171–191 (WFLVDLISSIPVDYIFLVVEL). The Extracellular segment spans residues 192 to 200 (EPRLDAEVY). A helical; Voltage-sensor transmembrane segment spans residues 201-221 (KTARALRIVRFTKILSLLRLL). The Cytoplasmic portion of the chain corresponds to 222–252 (RLSRLIRYIHQWEEIFHMTYDLASAVVRIFN). Residues 253 to 273 (LIGMMLLLCHWDGCLQFLVPM) traverse the membrane as a helical segment. Residues 274-296 (LQDFPSDCWVSMNRMVNHSWGRQ) are Extracellular-facing. N-linked (GlcNAc...) asparagine glycosylation occurs at N290. The pore-forming intramembrane region spans 297 to 318 (YSHALFKAMSHMLCIGYGQQAP). Residues 319–328 (VGMPDVWLTM) are Extracellular-facing. The chain crosses the membrane as a helical span at residues 329-349 (LSMIVGATCYAMFIGHATALI). Residues 350-779 (QSLDSSRRQY…PRGPQISANM (430 aa)) lie on the Cytoplasmic side of the membrane. The interaction with KCTD3 stretch occupies residues 353–779 (DSSRRQYQEK…PRGPQISANM (427 aa)). 3',5'-cyclic AMP is bound by residues G491, E492, C494, R501, T502, R542, and R545. The interval 549 to 569 (KNSILQRKRSEPSPGSSGGVM) is disordered. Residue S633 is modified to Phosphoserine. The span at 687–697 (SLSRTGRSQVS) shows a compositional bias: polar residues. The tract at residues 687-779 (SLSRTGRSQV…PRGPQISANM (93 aa)) is disordered.

Belongs to the potassium channel HCN family. In terms of assembly, homotetramer. The potassium channel is composed of a homo- or heterotetrameric complex of pore-forming subunits. Interacts with HCN1. Interacts with KCTD3; this interaction increases cell surface expression and current density of this channel. Interacts with PEX5L. In terms of tissue distribution, detected in hypothalamus, amygdala, olfactory bulb, hippocampus and retina (at protein level). Highly expressed in brain and heart, in particular in ventricle, atrium and in sinoatrial node (SAN). Detected at low levels in skeletal muscle and lung. Expressed in DRG neurons.

Its subcellular location is the cell membrane. It carries out the reaction K(+)(in) = K(+)(out). The enzyme catalyses Na(+)(in) = Na(+)(out). Its activity is regulated as follows. Unlike HCN2 and HCN4, HCN3 is insensitive to cyclic nucleotides, such as cAMP or cGMP. This lack of sensitivity of HCN3, despite harboring a functional cyclic nucleotide-binding domain (CNBD), may be explained by its shorter C-terminal sequence, which may alter the normal autoinhibition of the channel. Inhibited by Cs(1+) and ivabradine. Phosphatidylinositol-4,5-bisphosphate (PIP(2)) shifts HCN3 activation to more depolarized potentials and accelerated activation kinetics. Functionally, hyperpolarization-activated ion channel that are permeable to sodium and potassium ions, with an about 3:1 preference for potassium ions. Contributes to the native pacemaker currents in heart (If) and in neurons (Ih). In particular, plays a pivotal role in maintaining excitability and promoting rhythmic burst firing within hypothalamic nuclei. Exerts a significant influence on the configuration of the cardiac action potential waveform. Does not appear to play a prominent role in the processing of acute, neuropathic, or inflammatory pain. The sequence is that of Potassium/sodium hyperpolarization-activated cyclic nucleotide-gated channel 3 (Hcn3) from Mus musculus (Mouse).